Here is a 662-residue protein sequence, read N- to C-terminus: MYLAILALPMFGSAVAGLRGRTIGVTGAHIITTGCLMTSAALSIVAFYEVGLSGSPVSIVIGSWIDSEFMLVQWGFLFDSLTVSMLLPVLIVSSLVHLYSISYMAGDPHNQRFFSYLSMFTFFMLVLVAGDNYFIMFVGWEGIGISSYLLINFWYTRMQANKAGMKALTVNRVGDMFLSVGFFAIFWVFGNVDYASVFSVAPYINETAITIIGLLLLVGAMAKSANIPLHTWLPDAMEGPTPVSALIHAATLVTAGVYLMLRSSPIIEYGPTVLVVITWVGALTAFFAATTGLLQNDLKRVIAYSTCSQMGYLFMAVGLSQYNVALFHLVNHAFFKALLFLAAGAVIHGMADQQDLRRLGGLVNFLPFTYTAILIGSLSLMALPFMTGFYSKDLILEVALGQYEVSGTIAYWLGTISAVFTAFYSFRLVSLTFFTTPNAPKGDYLHAHEAPMIIVIPLVILSIMSIVFGYIAKDMFVGVGTDFLSTALFQHPDHITLIEAEFGLPLLMKLLPAIGSLFGAGLALYLYHVVPSITISLTNGPIGYGVYSFLNAKWYWDALYNGLIIESGLRIGLVISKVIDRGIIELTGPYGLSTVLTGAGRSVATYDTGVITSYALYIMLGLVSLIFLVFAPTNMVFNEYGLSLILVYLSALVLLPSSTRTS.

16 helical membrane-spanning segments follow: residues 40–62 (AALSIVAFYEVGLSGSPVSIVIG), 77–99 (LFDSLTVSMLLPVLIVSSLVHLY), 112–129 (RFFSYLSMFTFFMLVLVA), 133–155 (YFIMFVGWEGIGISSYLLINFWY), 168–190 (LTVNRVGDMFLSVGFFAIFWVFG), 200–222 (VAPYINETAITIIGLLLLVGAMA), 243–262 (VSALIHAATLVTAGVYLMLR), 272–294 (TVLVVITWVGALTAFFAATTGLL), 301–320 (VIAYSTCSQMGYLFMAVGLS), 325–347 (ALFHLVNHAFFKALLFLAAGAVI), 360–382 (GGLVNFLPFTYTAILIGSLSLMA), 408–430 (TIAYWLGTISAVFTAFYSFRLVS), 450–472 (APMIIVIPLVILSIMSIVFGYIA), 510–529 (LLPAIGSLFGAGLALYLYHV), 609–631 (GVITSYALYIMLGLVSLIFLVFA), and 636–658 (VFNEYGLSLILVYLSALVLLPSS).

The protein belongs to the complex I subunit 5 family.

Its subcellular location is the mitochondrion inner membrane. The enzyme catalyses a ubiquinone + NADH + 5 H(+)(in) = a ubiquinol + NAD(+) + 4 H(+)(out). In terms of biological role, core subunit of the mitochondrial membrane respiratory chain NADH dehydrogenase (Complex I) that is believed to belong to the minimal assembly required for catalysis. Complex I functions in the transfer of electrons from NADH to the respiratory chain. The immediate electron acceptor for the enzyme is believed to be ubiquinone. The sequence is that of NADH-ubiquinone oxidoreductase chain 5 (ND5) from Cryptococcus neoformans var. grubii serotype A (strain H99 / ATCC 208821 / CBS 10515 / FGSC 9487) (Filobasidiella neoformans var. grubii).